Consider the following 258-residue polypeptide: Tryptophan synthase alpha chain (258 aa).

Active-site proton acceptor residues include E47 and D58.

The protein belongs to the TrpA family. As to quaternary structure, tetramer of two alpha and two beta chains.

It catalyses the reaction (1S,2R)-1-C-(indol-3-yl)glycerol 3-phosphate + L-serine = D-glyceraldehyde 3-phosphate + L-tryptophan + H2O. It participates in amino-acid biosynthesis; L-tryptophan biosynthesis; L-tryptophan from chorismate: step 5/5. The alpha subunit is responsible for the aldol cleavage of indoleglycerol phosphate to indole and glyceraldehyde 3-phosphate. In Bacillus cereus (strain AH820), this protein is Tryptophan synthase alpha chain.